The primary structure comprises 188 residues: Protein GrpE 2 (188 aa).

Belongs to the GrpE family. As to quaternary structure, homodimer.

It is found in the cytoplasm. Its function is as follows. Participates actively in the response to hyperosmotic and heat shock by preventing the aggregation of stress-denatured proteins, in association with DnaK and GrpE. It is the nucleotide exchange factor for DnaK and may function as a thermosensor. Unfolded proteins bind initially to DnaJ; upon interaction with the DnaJ-bound protein, DnaK hydrolyzes its bound ATP, resulting in the formation of a stable complex. GrpE releases ADP from DnaK; ATP binding to DnaK triggers the release of the substrate protein, thus completing the reaction cycle. Several rounds of ATP-dependent interactions between DnaJ, DnaK and GrpE are required for fully efficient folding. This chain is Protein GrpE 2, found in Buchnera aphidicola subsp. Acyrthosiphon pisum (strain APS) (Acyrthosiphon pisum symbiotic bacterium).